The following is a 115-amino-acid chain: NADH-ubiquinone oxidoreductase chain 3 (115 aa).

A run of 3 helical transmembrane segments spans residues Ile-3–Trp-23, Phe-55–Leu-75, and Thr-86–Trp-106.

It belongs to the complex I subunit 3 family. As to quaternary structure, core subunit of respiratory chain NADH dehydrogenase (Complex I) which is composed of 45 different subunits. Interacts with TMEM186. Interacts with TMEM242.

The protein localises to the mitochondrion inner membrane. The enzyme catalyses a ubiquinone + NADH + 5 H(+)(in) = a ubiquinol + NAD(+) + 4 H(+)(out). Core subunit of the mitochondrial membrane respiratory chain NADH dehydrogenase (Complex I) which catalyzes electron transfer from NADH through the respiratory chain, using ubiquinone as an electron acceptor. Essential for the catalytic activity of complex I. This chain is NADH-ubiquinone oxidoreductase chain 3, found in Sus scrofa (Pig).